The primary structure comprises 177 residues: Large ribosomal subunit protein uL6 (177 aa).

This sequence belongs to the universal ribosomal protein uL6 family. In terms of assembly, part of the 50S ribosomal subunit.

In terms of biological role, this protein binds to the 23S rRNA, and is important in its secondary structure. It is located near the subunit interface in the base of the L7/L12 stalk, and near the tRNA binding site of the peptidyltransferase center. The chain is Large ribosomal subunit protein uL6 from Xanthobacter autotrophicus (strain ATCC BAA-1158 / Py2).